The following is a 387-amino-acid chain: Succinate--CoA ligase [ADP-forming] subunit beta (387 aa).

In terms of domain architecture, ATP-grasp spans 9 to 245 (KDLLESYGLK…KSQENAKELK (237 aa)). Residues lysine 46, 53–55 (GRG), glutamate 100, tyrosine 103, and glutamate 108 each bind ATP. Residues asparagine 200 and aspartate 214 each coordinate Mg(2+). Substrate-binding positions include asparagine 265 and 322–324 (GIV).

Belongs to the succinate/malate CoA ligase beta subunit family. Heterotetramer of two alpha and two beta subunits. Mg(2+) serves as cofactor.

The catalysed reaction is succinate + ATP + CoA = succinyl-CoA + ADP + phosphate. The enzyme catalyses GTP + succinate + CoA = succinyl-CoA + GDP + phosphate. Its pathway is carbohydrate metabolism; tricarboxylic acid cycle; succinate from succinyl-CoA (ligase route): step 1/1. Its function is as follows. Succinyl-CoA synthetase functions in the citric acid cycle (TCA), coupling the hydrolysis of succinyl-CoA to the synthesis of either ATP or GTP and thus represents the only step of substrate-level phosphorylation in the TCA. The beta subunit provides nucleotide specificity of the enzyme and binds the substrate succinate, while the binding sites for coenzyme A and phosphate are found in the alpha subunit. This Francisella tularensis subsp. tularensis (strain FSC 198) protein is Succinate--CoA ligase [ADP-forming] subunit beta.